The primary structure comprises 225 residues: MTVMAPVVTVDGPSGAGKGTLCKALAEALQWNLLDSGAIYRVLALAALHHHVDISSEDALVPLASHLDVRFVAEDGQLKVILEGEDVSHEIRTEAVGNTASQAAAFPRVREALLRRQRAFREAPGLIADGRDMGTVVFPDAPVKIFLDASAEERAQRRMLQLQGKGFNVNFERLLSEIKERDDRDRSRPVAPLVPAADALVLDSTEMTIDEVIARALAYAREILA.

Position 12–20 (12–20) interacts with ATP; that stretch reads GPSGAGKGT.

It belongs to the cytidylate kinase family. Type 1 subfamily.

It localises to the cytoplasm. It carries out the reaction CMP + ATP = CDP + ADP. The enzyme catalyses dCMP + ATP = dCDP + ADP. The chain is Cytidylate kinase from Pectobacterium atrosepticum (strain SCRI 1043 / ATCC BAA-672) (Erwinia carotovora subsp. atroseptica).